A 139-amino-acid chain; its full sequence is Holo-[acyl-carrier-protein] synthase (139 aa).

The Mg(2+) site is built by Asp8 and Glu61.

It belongs to the P-Pant transferase superfamily. AcpS family. Mg(2+) serves as cofactor.

The protein localises to the cytoplasm. It carries out the reaction apo-[ACP] + CoA = holo-[ACP] + adenosine 3',5'-bisphosphate + H(+). Its function is as follows. Transfers the 4'-phosphopantetheine moiety from coenzyme A to a Ser of acyl-carrier-protein. This chain is Holo-[acyl-carrier-protein] synthase, found in Nitrobacter winogradskyi (strain ATCC 25391 / DSM 10237 / CIP 104748 / NCIMB 11846 / Nb-255).